The chain runs to 626 residues: tRNA uridine 5-carboxymethylaminomethyl modification enzyme MnmG (626 aa).

13–18 (GGGHAG) contacts FAD. 273–287 (GPRYCPSIEDKIHRF) contributes to the NAD(+) binding site.

This sequence belongs to the MnmG family. Homodimer. Heterotetramer of two MnmE and two MnmG subunits. Requires FAD as cofactor.

The protein localises to the cytoplasm. Functionally, NAD-binding protein involved in the addition of a carboxymethylaminomethyl (cmnm) group at the wobble position (U34) of certain tRNAs, forming tRNA-cmnm(5)s(2)U34. In Acinetobacter baylyi (strain ATCC 33305 / BD413 / ADP1), this protein is tRNA uridine 5-carboxymethylaminomethyl modification enzyme MnmG.